The sequence spans 287 residues: Short-chain dehydrogenase virD (287 aa).

The NADP(+) site is built by Val10, Thr36, Asp57, Asn85, Tyr149, Lys153, Val182, and Thr184. Tyr149 acts as the Proton acceptor in catalysis. Lys153 (lowers pKa of active site Tyr) is an active-site residue.

This sequence belongs to the short-chain dehydrogenases/reductases (SDR) family.

The protein operates within secondary metabolite biosynthesis. Short-chain dehydrogenase; part of the gene cluster that mediates the biosynthesis of virensols and trichoxide, fungal natural products that contain or are derived from a salicylaldehyde core. The pathway begins with the synthesis of the reduced chain in virensol C by the highly reducing polyketide synthase virA via condensation of one acetate and 8 malonate units. VirA has interesting programming rules since the first 2 ketides are fully reduced, the 3 following ketides undergo beta-dehydration, and the last 3 ketides are only reduced to beta-hydroxys to yield the trihydroxy portion. The production of aldehyde virensol C by virA alone is surprising, since virA does not contain a reductase (R) domain that is typically associated with reductive product release in HRPKS. The cupin-domain enzyme virC is involved in enhancing virA product turnover. The short-chain dehydrogenase virB then oxidizes the C-7 alcohol of virensol C to a ketone, yielding virensol D. Virensol D is further transformed to salicylaldehyde 5-deoxyaurocitrin by the short-chain dehydrogenase virD. VirD catalyzes the dehydrogenation of C-3 to form the beta-ketone aldehyde, which is followed by the generation of the nucleophilic C-2 that is required for the intramolecular aldol condensation between C-2 and C-7, itself followed by dehydration and aromatization which leads to salicylaldehyde 5-deoxyaurocitrin. While the dehydrogenation of virensol D is definitely catalyzed by virD, the aldol condensation and dehydration may be uncatalyzed or assisted by virD. The short chain dehydrogenase virG then converts salicylaldehyde 5-deoxyaurocitrin into virensol B which is further hydroxylated by the cytochrome P450 monooxygenase virE to yield the hydroquinone virensol A. VirI then may oxidize virensol A to form the quinone, while virH performs the epoxidation. Finally, the two remaining short-chain dehydrogenases, virK and virL, are probably responsible for reducing the ketones to the corresponding alcohols to furnish the epoxycyclohexanol structure in trichoxide. The polypeptide is Short-chain dehydrogenase virD (Hypocrea virens (strain Gv29-8 / FGSC 10586) (Gliocladium virens)).